Consider the following 138-residue polypeptide: ATP synthase epsilon chain (138 aa).

This sequence belongs to the ATPase epsilon chain family. F-type ATPases have 2 components, CF(1) - the catalytic core - and CF(0) - the membrane proton channel. CF(1) has five subunits: alpha(3), beta(3), gamma(1), delta(1), epsilon(1). CF(0) has four main subunits: a(1), b(1), b'(1) and c(9-12).

It is found in the cellular thylakoid membrane. In terms of biological role, produces ATP from ADP in the presence of a proton gradient across the membrane. Its function is as follows. The complex from the organism is particularly stable to disruption and remains functional after 6 hours at 55 degrees Celsius. This is ATP synthase epsilon chain from Thermosynechococcus vestitus (strain NIES-2133 / IAM M-273 / BP-1).